The sequence spans 385 residues: Cell wall mannoprotein PIR1 (385 aa).

An N-terminal signal peptide occupies residues 1–18 (MKYSTLVSIAAFISTSLA). PIR1/2/3 repeat units follow at residues 78 to 96 (ATPVAQITDGQVQHQTTGG), 97 to 115 (VSAIKQISDGQVQHQTNAA), 116 to 133 (QPIAQISDGQIQHQTTAK), 136 to 153 (ATPVQQINDGQIQHQTTV), 154 to 171 (QPVAQISDGQIQHQTAKA), 173 to 190 (ATPVQQIGDGQIQHQTTV), 191 to 208 (QPVAQISDGQIQHQTVKA), 210 to 228 (ATPVQQIGDGQIQHQTTAA), and 233 to 251 (ASAVKQINDGQIQHQTTTA). The disordered stretch occupies residues 257 to 282 (AQSDGQAIATGSPSSNSTLSDDDDLS). Residue asparagine 272 is glycosylated (N-linked (GlcNAc...) asparagine).

It belongs to the PIR protein family. Covalently linked to beta-1,3-glucan of the inner cell wall layer via an alkali-sensitive ester linkage between the gamma-carboxyl group of glutamic acids, arising from specific glutamines within the PIR1/2/3 repeats, and hydroxyl groups of glucoses of beta-1,3-glucan chains. In terms of processing, highly O-glycosylated by PMT1 and contains one N-mannosylated chain.

Its subcellular location is the secreted. It is found in the cell wall. In terms of biological role, component of the outer cell wall layer required for stability of the cell wall and specifically for cell wall rigidity. This Candida albicans (strain SC5314 / ATCC MYA-2876) (Yeast) protein is Cell wall mannoprotein PIR1 (PIR1).